Here is a 247-residue protein sequence, read N- to C-terminus: Serine/threonine-protein phosphatase 2A activator (247 aa).

It belongs to the PTPA-type PPIase family.

It localises to the cytoplasm. It catalyses the reaction [protein]-peptidylproline (omega=180) = [protein]-peptidylproline (omega=0). PPIases accelerate the folding of proteins. It catalyzes the cis-trans isomerization of proline imidic peptide bonds in oligopeptides. Acts as a regulatory subunit for PP2A-like phosphatases modulating their activity or substrate specificity, probably by inducing a conformational change in the catalytic subunit, a direct target of the PPIase. Can reactivate inactive phosphatase PP2A-phosphatase methylesterase complexes (PP2Ai) in presence of ATP and Mg(2+) by dissociating the inactive form from the complex. The sequence is that of Serine/threonine-protein phosphatase 2A activator from Encephalitozoon cuniculi (strain GB-M1) (Microsporidian parasite).